The following is a 391-amino-acid chain: MVTQNKKILIITGSFGNGHLQVTQSVVNQLNEMNLSHLSVIEHDLFMEAHPILTSICKKWYINSFKYFRNMYKNFYYSRPDELDKCFYKYYGLNKLINLLLKEKPDLILLTFPTPVMSVLTEQFNINIPIATVMTDYRLQKNWITPNSHRYYVATDDTKRDFVNAGIPASDIKVTGIPISDKFESDIDKVAWLKKHNLNPDKPTILMSAGAFGVSKGFDYMIDNILQKSPQSQIVMVCGRSKGLKRTLEMQFKSYDNVLILGYTKHMNEWMASSQLMITKPGGITISEGLTRSLPMIFLNPAPGQELENALYFQDKSYGKIANTPEEAIDIVSDLTNHEYRLQAMTNKMTEEKVNHSTYRLCTDLLNILDSSSQQQEIYGKVPLYARFFVK.

It belongs to the glycosyltransferase 28 family. UgtP subfamily.

It is found in the cell membrane. It catalyses the reaction a 1,2-diacyl-3-O-(beta-D-glucopyranosyl)-sn-glycerol + UDP-alpha-D-glucose = a 1,2-diacyl-3-O-(beta-D-Glc-(1-&gt;6)-beta-D-Glc)-sn-glycerol + UDP + H(+). The enzyme catalyses a 1,2-diacyl-sn-glycerol + UDP-alpha-D-glucose = a 1,2-diacyl-3-O-(beta-D-glucopyranosyl)-sn-glycerol + UDP + H(+). The protein operates within glycolipid metabolism; diglucosyl-diacylglycerol biosynthesis. Functionally, processive glucosyltransferase involved in the biosynthesis of both the bilayer- and non-bilayer-forming membrane glucolipids. Is able to successively transfer two glucosyl residues to diacylglycerol (DAG), thereby catalyzing the formation of beta-monoglucosyl-DAG (3-O-(beta-D-glucopyranosyl)-1,2-diacyl-sn-glycerol) and beta-diglucosyl-DAG (3-O-(beta-D-glucopyranosyl-beta-(1-&gt;6)-D-glucopyranosyl)-1,2-diacyl-sn-glycerol). Beta-diglucosyl-DAG is the predominant glycolipid found in Bacillales and is also used as a membrane anchor for lipoteichoic acid (LTA). This Staphylococcus haemolyticus (strain JCSC1435) protein is Processive diacylglycerol beta-glucosyltransferase.